Consider the following 421-residue polypeptide: UDP-N-acetylglucosamine 1-carboxyvinyltransferase 1 (421 aa).

22–23 (KN) is a phosphoenolpyruvate binding site. Residue arginine 95 coordinates UDP-N-acetyl-alpha-D-glucosamine. The active-site Proton donor is the cysteine 119. Cysteine 119 is modified (2-(S-cysteinyl)pyruvic acid O-phosphothioketal). UDP-N-acetyl-alpha-D-glucosamine-binding positions include 124 to 128 (RPIEQ), aspartate 308, and valine 330.

It belongs to the EPSP synthase family. MurA subfamily.

It localises to the cytoplasm. It carries out the reaction phosphoenolpyruvate + UDP-N-acetyl-alpha-D-glucosamine = UDP-N-acetyl-3-O-(1-carboxyvinyl)-alpha-D-glucosamine + phosphate. Its pathway is cell wall biogenesis; peptidoglycan biosynthesis. Its function is as follows. Cell wall formation. Adds enolpyruvyl to UDP-N-acetylglucosamine. The protein is UDP-N-acetylglucosamine 1-carboxyvinyltransferase 1 of Staphylococcus aureus (strain MW2).